The sequence spans 169 residues: Probable calcium-binding protein CML13 (169 aa).

The tract at residues M1–R26 is disordered. The span at G15 to Q24 shows a compositional bias: basic residues. EF-hand domains follow at residues Q24–E59, M60–E95, D97–N132, and F133–G168. Ca(2+) is bound by residues D37, D39, S41, T43, E48, D73, D75, S77, S79, E84, D110, D112, N114, K116, D121, D146, N148, D150, E152, and E157.

Functionally, potential calcium sensor. In Oryza sativa subsp. japonica (Rice), this protein is Probable calcium-binding protein CML13 (CML13).